We begin with the raw amino-acid sequence, 311 residues long: Ribonuclease Z (311 aa).

7 residues coordinate Zn(2+): H61, H63, D65, H66, H148, D216, and H275. D65 serves as the catalytic Proton acceptor.

This sequence belongs to the RNase Z family. Homodimer. Zn(2+) serves as cofactor.

The enzyme catalyses Endonucleolytic cleavage of RNA, removing extra 3' nucleotides from tRNA precursor, generating 3' termini of tRNAs. A 3'-hydroxy group is left at the tRNA terminus and a 5'-phosphoryl group is left at the trailer molecule.. Zinc phosphodiesterase, which displays some tRNA 3'-processing endonuclease activity. Probably involved in tRNA maturation, by removing a 3'-trailer from precursor tRNA. This Clostridium novyi (strain NT) protein is Ribonuclease Z.